We begin with the raw amino-acid sequence, 208 residues long: MLVAIEGIDGAGKTTLARSLALKLRGVGLETVVSKEPTNGPWGMLLRQSAATGRFSPEEEVDVLLRDRRQHVEDLIVPMIGRGAVVILDRYFPSMVAYQGAAGLPVDALLEANAFAPRPDVLLLLDVPPAIGLQRIWERGSTPNHFETTENLSRCRDIFLALELPSKRVIDATANAETVLSAALALVMEVLRVRLGALGAVVLRRLAG.

7-14 (GIDGAGKT) lines the ATP pocket.

The protein belongs to the thymidylate kinase family.

It catalyses the reaction dTMP + ATP = dTDP + ADP. Phosphorylation of dTMP to form dTDP in both de novo and salvage pathways of dTTP synthesis. The sequence is that of Thymidylate kinase (tmk) from Xylella fastidiosa (strain 9a5c).